Reading from the N-terminus, the 364-residue chain is Dihydroorotate dehydrogenase (quinone) (364 aa).

Residues 61 to 65 (AGFDK) and Thr-85 contribute to the FMN site. Lys-65 contributes to the substrate binding site. Position 110 to 114 (110 to 114 (NRMGF)) interacts with substrate. Residues Asn-139 and Asn-170 each coordinate FMN. Asn-170 contacts substrate. The Nucleophile role is filled by Ser-173. Asn-175 lines the substrate pocket. Residues Lys-214 and Ala-242 each coordinate FMN. 243-244 (NT) serves as a coordination point for substrate. FMN-binding positions include Gly-266, Gly-295, and 316–317 (YS).

Belongs to the dihydroorotate dehydrogenase family. Type 2 subfamily. In terms of assembly, monomer. FMN serves as cofactor.

The protein resides in the cell membrane. It catalyses the reaction (S)-dihydroorotate + a quinone = orotate + a quinol. It functions in the pathway pyrimidine metabolism; UMP biosynthesis via de novo pathway; orotate from (S)-dihydroorotate (quinone route): step 1/1. Its function is as follows. Catalyzes the conversion of dihydroorotate to orotate with quinone as electron acceptor. The protein is Dihydroorotate dehydrogenase (quinone) of Rhodopseudomonas palustris (strain BisB5).